A 324-amino-acid polypeptide reads, in one-letter code: Disintegrin-like/cysteine-rich protein MPIII-3 (324 aa).

The N-terminal stretch at 1–20 is a signal peptide; sequence MIQVLLVIICLAVFPYQVSS. Positions 21–173 are cleaved as a propeptide — or 174 (in a minor form); sequence IILESGNINN…DEDPKKCEFR (153 aa). In terms of domain architecture, Disintegrin; truncated spans 168–207; that stretch reads KKCEFRRAGTECRPARSECDVAEYCTGQSAECPTDVFHSN. The segment at 179–192 is inhibits platelet aggregation; that stretch reads CRPARSECDVAEYC. Disulfide bonds link Cys179-Cys199, Cys186-Cys218, Cys192-Cys199, Cys211-Cys223, Cys230-Cys280, Cys245-Cys287, Cys258-Cys268, Cys275-Cys312, and Cys306-Cys317. The D/ECD-tripeptide motif lies at 185–187; the sequence is ECD. Ca(2+)-binding residues include Asp187 and Glu190. The Ca(2+) site is built by Asp202 and Val203. Residue Asn237 is glycosylated (N-linked (GlcNAc...) asparagine).

The protein belongs to the venom metalloproteinase (M12B) family. P-III subfamily. P-IIIe sub-subfamily. As to quaternary structure, monomer. Is able to form a homodimer. In terms of processing, N-glycosylated. Exists in at least six differently N-glycosylated forms. The glycans likely have a stabilizing purpose. Cys-199 forms a disulfide bond with Cys-192 in 90% and with Cys-179 in 10% of the protein molecules; alternative disulfide bonds may have a major effect on the conformation of the protein. In terms of tissue distribution, expressed by the venom gland (at protein level). Expressed by the venom gland.

The protein resides in the secreted. With respect to regulation, activity may be regulated by the intramolecular thiol-disulfide exchange or disulfide bond switching. Functionally, abolishes platelet aggregation induced by collagen, ADP (IC(50)=292 nM) and arachidonic-acid. The inhibition of collagen-induced platelet aggregation may be due to its ability to bind collagen and block the binding site on collagen for platelets and/or to its ability to bind to the platelet alpha-2/beta-1 collagen receptor (ITGA2/ITGB1) to block its interaction with collagen and hence prevent platelet stimulation. The inhibition of ADP- or arachidonic-acid-induced platelet aggregation may be due to it acting as an antagonist of the ADP receptors or thromboxane-prostanoid receptors of the platelets, respectively. Does not interact with integrins alpha-IIb (ITGA2B) or beta-3 (ITGB3) nor platelet glycoproteins VI (GP6) or IX (GP9) in vitro, however, the detection is dependent on experimental conditions and may happen in vivo. Able to bind to platelet glycoprotein Ib alpha chain (GP1BA) receptor in vitro, although this interaction may have pathologically only limited effect in vivo as it is not able to abolish the von Willebrand factor (vWF)-dependent platelet agglutination induced by ristocetin. Does not affect blood coagulation. This is Disintegrin-like/cysteine-rich protein MPIII-3 from Vipera ammodytes ammodytes (Western sand viper).